The following is a 153-amino-acid chain: Ribosome maturation factor RimP (153 aa).

It belongs to the RimP family.

It is found in the cytoplasm. In terms of biological role, required for maturation of 30S ribosomal subunits. This chain is Ribosome maturation factor RimP, found in Clostridium botulinum (strain Loch Maree / Type A3).